The chain runs to 519 residues: Glycogen synthase (519 aa).

Residues 1–40 form a disordered region; it reads MISAAVEPHVDAFKPDNREPLTPDFATTGKAPGAQRQHNP. Over residues 8–21 the composition is skewed to basic and acidic residues; that stretch reads PHVDAFKPDNREPL. K57 lines the ADP-alpha-D-glucose pocket.

The protein belongs to the glycosyltransferase 1 family. Bacterial/plant glycogen synthase subfamily.

It carries out the reaction [(1-&gt;4)-alpha-D-glucosyl](n) + ADP-alpha-D-glucose = [(1-&gt;4)-alpha-D-glucosyl](n+1) + ADP + H(+). It participates in glycan biosynthesis; glycogen biosynthesis. Its function is as follows. Synthesizes alpha-1,4-glucan chains using ADP-glucose. This is Glycogen synthase from Pseudomonas putida (strain ATCC 47054 / DSM 6125 / CFBP 8728 / NCIMB 11950 / KT2440).